The following is a 504-amino-acid chain: 26S proteasome non-ATPase regulatory subunit 3 (504 aa).

The region spanning 254-434 is the PCI domain; the sequence is ARYFYYQGRI…GYLQSRENID (181 aa). The tract at residues 485–504 is disordered; that stretch reads KEEMERQAEESSDNEGDSDF. Residues 494–504 are compositionally biased toward acidic residues; that stretch reads ESSDNEGDSDF.

It belongs to the proteasome subunit S3 family. The 26S proteasome is composed of a core protease, known as the 20S proteasome, capped at one or both ends by the 19S regulatory complex (RC). The RC is composed of at least 18 different subunits in two subcomplexes, the base and the lid, which form the portions proximal and distal to the 20S proteolytic core, respectively.

Acts as a regulatory subunit of the 26 proteasome which is involved in the ATP-dependent degradation of ubiquitinated proteins. The sequence is that of 26S proteasome non-ATPase regulatory subunit 3 (psmD3) from Dictyostelium discoideum (Social amoeba).